Reading from the N-terminus, the 714-residue chain is Polyribonucleotide nucleotidyltransferase (714 aa).

The Mg(2+) site is built by Asp484 and Asp490. The region spanning Pro551–Ile610 is the KH domain. Residues Gly620 to Lys688 enclose the S1 motif domain. The segment at Leu685–Lys714 is disordered. Residues Lys693–Lys714 show a composition bias toward basic and acidic residues.

The protein belongs to the polyribonucleotide nucleotidyltransferase family. The cofactor is Mg(2+).

The protein localises to the cytoplasm. It carries out the reaction RNA(n+1) + phosphate = RNA(n) + a ribonucleoside 5'-diphosphate. Functionally, involved in mRNA degradation. Catalyzes the phosphorolysis of single-stranded polyribonucleotides processively in the 3'- to 5'-direction. In Finegoldia magna (strain ATCC 29328 / DSM 20472 / WAL 2508) (Peptostreptococcus magnus), this protein is Polyribonucleotide nucleotidyltransferase.